Reading from the N-terminus, the 156-residue chain is AP-1 complex subunit sigma-1 (156 aa).

It belongs to the adaptor complexes small subunit family. Adaptor protein complex 1 (AP-1) is a heterotetramer composed of two large adaptins (gamma-type subunit and beta-type subunit), a medium adaptin (mu-type subunit) and a small adaptin (sigma-type subunit).

It is found in the golgi apparatus. Its subcellular location is the trans-Golgi network. It localises to the cytoplasmic vesicle. The protein localises to the clathrin-coated vesicle membrane. Functionally, subunit of clathrin-associated adaptor protein complex 1 that plays a role in protein sorting in the trans-Golgi network (TGN) and endosomes. The AP complexes mediate the recruitment of clathrin to membranes and the recognition of sorting signals within the cytosolic tails of transmembrane cargo molecules. Also involved in early steps of phagocytosis and macropinocytosis. The sequence is that of AP-1 complex subunit sigma-1 (ap1s1) from Dictyostelium discoideum (Social amoeba).